The chain runs to 264 residues: Cercarial protease (264 aa).

The N-terminal stretch at 1–19 is a signal peptide; sequence MSNRWRFVVVVTLFTYCLT. A propeptide spanning residues 20–27 is cleaved from the precursor; it reads FERVSTWL. Residues 28–264 form the Peptidase S1 domain; the sequence is IRSGEPVQHP…RMLDFVRSNI (237 aa). Residues Cys53 and Cys69 are joined by a disulfide bond. Residues His68 and Asp126 each act as charge relay system in the active site. Cys192 and Cys202 are joined by a disulfide. Ser218 serves as the catalytic Charge relay system.

This sequence belongs to the peptidase S1 family. Acetabular (penetration) glands.

Its activity is regulated as follows. Activated by an autocatalytic mechanism. This protease cleaves elastin and thus facilitates penetration of schistosome parasite larvae through elastin-rich tissue of the host. This chain is Cercarial protease, found in Schistosoma mansoni (Blood fluke).